The chain runs to 225 residues: Glucose-induced degradation protein 8 homolog (225 aa).

In terms of domain architecture, LisH spans 22-54 (QRAEMNRLIMDYLVTEGYKEAAEKFRIESGTQP). One can recognise a CTLH domain in the interval 60–117 (SLDDRIKIREAVQKGDLEQAVSMTNKLNPDILDSNQQLYFHLQQQRLIELIREKDIEA).

This sequence belongs to the GID8 family.

It localises to the cytoplasm. The protein localises to the nucleus. Its function is as follows. Core component of the CTLH E3 ubiquitin-protein ligase complex that mediates ubiquitination and subsequent proteasomal degradation of target proteins. Acts as a positive regulator of Wnt signaling pathway by promoting beta-catenin (CTNNB1) nuclear accumulation. This chain is Glucose-induced degradation protein 8 homolog, found in Nematostella vectensis (Starlet sea anemone).